A 168-amino-acid chain; its full sequence is Cyclic pyranopterin monophosphate synthase (168 aa).

Residues 75–77 and 115–116 contribute to the substrate site; these read MCH and ME. Residue aspartate 130 is part of the active site.

This sequence belongs to the MoaC family. Homohexamer; trimer of dimers.

The catalysed reaction is (8S)-3',8-cyclo-7,8-dihydroguanosine 5'-triphosphate = cyclic pyranopterin phosphate + diphosphate. It participates in cofactor biosynthesis; molybdopterin biosynthesis. Its function is as follows. Catalyzes the conversion of (8S)-3',8-cyclo-7,8-dihydroguanosine 5'-triphosphate to cyclic pyranopterin monophosphate (cPMP). The protein is Cyclic pyranopterin monophosphate synthase of Bacillus licheniformis (strain ATCC 14580 / DSM 13 / JCM 2505 / CCUG 7422 / NBRC 12200 / NCIMB 9375 / NCTC 10341 / NRRL NRS-1264 / Gibson 46).